We begin with the raw amino-acid sequence, 544 residues long: Methionine--tRNA ligase (544 aa).

Positions 10–20 (PYANGSLHLGH) match the 'HIGH' region motif. Zn(2+) contacts are provided by cysteine 141, cysteine 144, cysteine 153, and cysteine 156. Positions 329 to 333 (KLSTS) match the 'KMSKS' region motif. An ATP-binding site is contributed by threonine 332.

This sequence belongs to the class-I aminoacyl-tRNA synthetase family. MetG type 1 subfamily. As to quaternary structure, monomer. Zn(2+) is required as a cofactor.

Its subcellular location is the cytoplasm. It catalyses the reaction tRNA(Met) + L-methionine + ATP = L-methionyl-tRNA(Met) + AMP + diphosphate. Is required not only for elongation of protein synthesis but also for the initiation of all mRNA translation through initiator tRNA(fMet) aminoacylation. The sequence is that of Methionine--tRNA ligase from Bacillus cereus (strain B4264).